The primary structure comprises 192 residues: DNA dC-&gt;dU-editing enzyme APOBEC-3Ca (192 aa).

A CMP/dCMP-type deaminase domain is found at 15–141 (IDPNTFRFHF…PNYQEGLCKL (127 aa)). Residue His69 coordinates Zn(2+). Glu71 acts as the Proton donor in catalysis. Zn(2+) is bound by residues Cys100 and Cys103.

It belongs to the cytidine and deoxycytidylate deaminase family. (Microbial infection) Interacts with feline foamy virus protein Bet. This interaction does not induce APOBEC3Ca degradation but prevents its dimerization and incorporation into the virion. Zn(2+) is required as a cofactor.

The protein resides in the nucleus. Its subcellular location is the cytoplasm. It carries out the reaction a 2'-deoxycytidine in single-stranded DNA + H2O + H(+) = a 2'-deoxyuridine in single-stranded DNA + NH4(+). In terms of biological role, DNA deaminase (cytidine deaminase) which acts as an inhibitor of retrovirus replication and retrotransposon mobility via deaminase-dependent and -independent mechanisms. Selectively targets single-stranded DNA and does not deaminate double-stranded DNA or single- or double-stranded RNA. Does not reduce infectivity of foamy feline virus, feline immunodeficiency virus or feline leukemia virus. This chain is DNA dC-&gt;dU-editing enzyme APOBEC-3Ca, found in Felis catus (Cat).